A 700-amino-acid chain; its full sequence is Elongation factor G (700 aa).

Residues 8 to 290 (SLYRNIGISA…AVIDYLPAPT (283 aa)) enclose the tr-type G domain. Residues 17–24 (AHIDAGKT), 88–92 (DTPGH), and 142–145 (NKMD) contribute to the GTP site.

The protein belongs to the TRAFAC class translation factor GTPase superfamily. Classic translation factor GTPase family. EF-G/EF-2 subfamily.

The protein resides in the cytoplasm. Its function is as follows. Catalyzes the GTP-dependent ribosomal translocation step during translation elongation. During this step, the ribosome changes from the pre-translocational (PRE) to the post-translocational (POST) state as the newly formed A-site-bound peptidyl-tRNA and P-site-bound deacylated tRNA move to the P and E sites, respectively. Catalyzes the coordinated movement of the two tRNA molecules, the mRNA and conformational changes in the ribosome. This is Elongation factor G from Histophilus somni (strain 129Pt) (Haemophilus somnus).